The sequence spans 153 residues: Formate hydrogenlyase regulatory protein HycA (153 aa).

Regulatory protein for the formate hydrogenlyase system. Could act by directly interacting with FhlA or by preventing the binding of FhlA to the upstream activatory sequence. This chain is Formate hydrogenlyase regulatory protein HycA (hycA), found in Escherichia coli O157:H7.